Reading from the N-terminus, the 315-residue chain is Outer membrane protease IcsP (315 aa).

Positions 1-20 (MKLKFFVLALCVPAIFTTHA) are cleaved as a signal peptide. Active-site residues include Asp-103, Asp-105, Asp-230, and His-232.

It belongs to the peptidase A26 family.

It is found in the cell outer membrane. Functionally, protease responsible for the cleavage of IcsA between 'Arg-758' and 'Arg-759', removing the entire alpha domain from IscA localized on the bacterial surface. This proteolytic activity contributes to the maintenance of a tight polar cap of IcsA, which is important to Shigella actin-based motility. The sequence is that of Outer membrane protease IcsP (icsP) from Shigella flexneri.